The sequence spans 143 residues: Large ribosomal subunit protein uL11 (143 aa).

The protein belongs to the universal ribosomal protein uL11 family. Part of the ribosomal stalk of the 50S ribosomal subunit. Interacts with L10 and the large rRNA to form the base of the stalk. L10 forms an elongated spine to which L12 dimers bind in a sequential fashion forming a multimeric L10(L12)X complex. Post-translationally, one or more lysine residues are methylated.

Functionally, forms part of the ribosomal stalk which helps the ribosome interact with GTP-bound translation factors. In Treponema denticola (strain ATCC 35405 / DSM 14222 / CIP 103919 / JCM 8153 / KCTC 15104), this protein is Large ribosomal subunit protein uL11.